Reading from the N-terminus, the 952-residue chain is Bromodomain testis-specific protein (952 aa).

The region spanning 26–132 is the Bromo 1 domain; the sequence is RLTNQLQFLQ…KLFMQKLSQM (107 aa). Residues 141-150 show a composition bias toward basic and acidic residues; that stretch reads GKERMKKDIQ. The segment at 141–168 is disordered; it reads GKERMKKDIQQKTAVSSAKEQTPSKSAE. Over residues 151–167 the composition is skewed to polar residues; that stretch reads QKTAVSSAKEQTPSKSA. Phosphoserine is present on S186. The Nuclear localization signal signature appears at 208-219; it reads KGVKRRADTTTP. The segment at 209-257 is disordered; it reads GVKRRADTTTPTTSSAKASSESPPPLREAKPANAPVKENTVKSVLPDSQ. Residues 216–229 show a composition bias toward low complexity; that stretch reads TTTPTTSSAKASSE. The Bromo 2 domain occupies 266–375; sequence VKVTEQLKHC…DVFEMHFAKI (110 aa). Disordered regions lie at residues 392-420, 442-504, 607-746, and 850-930; these read SAKA…ERVQ, VPLR…NAKP, QLNC…GCQV, and KHLE…RREA. Residues 417-442 are a coiled coil; that stretch reads ERVQRLAKLQEQLNAVHQQLQVLSQV. The segment covering 445–463 has biased composition (basic residues); it reads RKLKKKNEKSKRAPKRKKV. In terms of domain architecture, NET spans 495-577; that stretch reads KLEEEDNAKP…ACLRKRSLKP (83 aa). Positions 610–619 are enriched in basic residues; the sequence is CRKRQTKRPA. The span at 625–638 shows a compositional bias: pro residues; that stretch reads PRPPLPPPPPPPPE. A compositionally biased stretch (low complexity) spans 646–681; sequence SDSSSSSSSSGSGSSSSSSSSSGSGSSSSDSSSSDS. The segment covering 718 to 729 has biased composition (polar residues); sequence SAETALVQQSTG. The stretch at 837–936 forms a coiled coil; that stretch reads EKEVKARTQE…RREAMAGTID (100 aa). The segment covering 850–867 has biased composition (basic and acidic residues); it reads KHLEHSAKDPKVSQESQR. Over residues 874-883 the composition is skewed to polar residues; the sequence is TPESSSNKVQ. Low complexity predominate over residues 893–902; sequence EQQQLPSPSE. A compositionally biased stretch (basic and acidic residues) spans 911–930; sequence LLKDRNLAREKEQERRRREA.

The protein belongs to the BET family. As to quaternary structure, interacts with the acetylated N-terminus of histone H1, H2, H3 and H4. Interacts with P-TEFb components CDK9 and CCNT1/cyclin-T1. Interacts with mRNA splicing machinery proteins SRSF2, DDX5, HNRNPK and TARDBP. Interacts with SMARCE1. Ubiquitinated in a SPOP-dependent manner, leading to proteasomal degradation.

The protein localises to the nucleus. Its function is as follows. Testis-specific chromatin protein that specifically binds histone H4 acetylated at 'Lys-5' and 'Lys-8' (H4K5ac and H4K8ac, respectively) and plays a key role in spermatogenesis. Required in late pachytene spermatocytes: plays a role in meiotic and post-meiotic cells by binding to acetylated histones at the promoter of specific meiotic and post-meiotic genes, facilitating their activation at the appropriate time. In the post-meiotic phase of spermatogenesis, binds to hyperacetylated histones and participates in their general removal from DNA. Also recognizes and binds a subset of butyrylated histones: able to bind histone H4 butyrylated at 'Lys-8' (H4K8ac), while it is not able to bind H4 butyrylated at 'Lys-5' (H4K5ac). Also acts as a component of the splicing machinery in pachytene spermatocytes and round spermatids and participates in 3'-UTR truncation of specific mRNAs in post-meiotic spermatids. Required for chromocenter organization, a structure comprised of peri-centromeric heterochromatin. This is Bromodomain testis-specific protein (Brdt) from Rattus norvegicus (Rat).